The sequence spans 122 residues: Large ribosomal subunit protein uL14c (122 aa).

Belongs to the universal ribosomal protein uL14 family. In terms of assembly, part of the 50S ribosomal subunit.

It is found in the plastid. It localises to the chloroplast. Binds to 23S rRNA. This Amborella trichopoda protein is Large ribosomal subunit protein uL14c.